Here is a 186-residue protein sequence, read N- to C-terminus: Ribosome-recycling factor (186 aa).

It belongs to the RRF family.

It localises to the cytoplasm. Its function is as follows. Responsible for the release of ribosomes from messenger RNA at the termination of protein biosynthesis. May increase the efficiency of translation by recycling ribosomes from one round of translation to another. The chain is Ribosome-recycling factor from Rickettsia akari (strain Hartford).